Here is a 148-residue protein sequence, read N- to C-terminus: uncharacterized protein (148 aa).

The N-acetyltransferase domain occupies Gln-8 to Asn-148.

It belongs to the acetyltransferase family.

This is an uncharacterized protein from Bacillus subtilis (strain 168).